We begin with the raw amino-acid sequence, 121 residues long: Large ribosomal subunit protein bL20 (121 aa).

This sequence belongs to the bacterial ribosomal protein bL20 family.

In terms of biological role, binds directly to 23S ribosomal RNA and is necessary for the in vitro assembly process of the 50S ribosomal subunit. It is not involved in the protein synthesizing functions of that subunit. In Ruegeria pomeroyi (strain ATCC 700808 / DSM 15171 / DSS-3) (Silicibacter pomeroyi), this protein is Large ribosomal subunit protein bL20.